Here is a 211-residue protein sequence, read N- to C-terminus: Ribonuclease HII (211 aa).

The region spanning 11–200 (EFIAGVDEVG…VKKLLSTLLS (190 aa)) is the RNase H type-2 domain. A divalent metal cation is bound by residues D17, E18, and D109.

Belongs to the RNase HII family. Mn(2+) is required as a cofactor. The cofactor is Mg(2+).

The protein localises to the cytoplasm. It catalyses the reaction Endonucleolytic cleavage to 5'-phosphomonoester.. In terms of biological role, endonuclease that specifically degrades the RNA of RNA-DNA hybrids. This chain is Ribonuclease HII, found in Histophilus somni (strain 2336) (Haemophilus somnus).